The following is a 710-amino-acid chain: Solute carrier organic anion transporter family member 3A1 (710 aa).

Residue M1 is modified to N-acetylmethionine. The segment covering 1–15 (MQGKKPGGSSGGGRS) has biased composition (gly residues). Residues 1–25 (MQGKKPGGSSGGGRSGELQGDEAQR) are disordered. Residues 1–40 (MQGKKPGGSSGGGRSGELQGDEAQRNKKKKKKVSCFSNIK) are Cytoplasmic-facing. Residues 41 to 60 (IFLVSECALMLAQGTVGAYL) form a helical membrane-spanning segment. Over 61–79 (VSVLTTLERRFNLQSADVG) the chain is Extracellular. The chain crosses the membrane as a helical span at residues 80-100 (VIASSFEIGNLALILFVSYFG). Over 101 to 106 (ARGHRP) the chain is Cytoplasmic. A helical membrane pass occupies residues 107–131 (RLIGCGGIVMALGALLSALPEFLTH). At 132 to 174 (QYKYEAGEIRWGAEGRDVCATNGSSSDEGPDPDLICRNRTATN) the chain is on the extracellular side. N153 and N169 each carry an N-linked (GlcNAc...) asparagine glycan. Residues 175 to 203 (MMYLLLIGAQVLLGIGATPVQPLGVSYID) traverse the membrane as a helical segment. The Cytoplasmic portion of the chain corresponds to 204–222 (DHVRRKDSSLYIGILFTML). Residues 223 to 243 (VFGPACGFILGSFCTKIYVDA) form a helical membrane-spanning segment. Residues 244–261 (VFIDTSNLDITPDDPRWI) are Extracellular-facing. Residues 262–286 (GAWWGGFLLCGALLFFSSLLMFGFP) form a helical membrane-spanning segment. Residues 287–344 (QSLPPHSDPGMESEQAMLPEREYERPKPSNGVLRHPLEPDSSASCFQQLRVIPKVTKH) are Cytoplasmic-facing. The helical transmembrane segment at 345–366 (LLSNPVFTCIVLAACMEIAVVA) threads the bilayer. The Extracellular segment spans residues 367–386 (GFAAFLGKYLEQQFNLTTSS). N381 carries an N-linked (GlcNAc...) asparagine glycan. Residues 387-410 (ANQLLGMTAIPCACLGIFLGGLLV) traverse the membrane as a helical segment. Topologically, residues 411–414 (KKLS) are cytoplasmic. Residues 415–438 (LSALGAIRMAMLVNLVSTACYVSF) traverse the membrane as a helical segment. The Extracellular segment spans residues 439-539 (LFLGCDTGPV…PGCQEAFLTF (101 aa)). N457 carries N-linked (GlcNAc...) asparagine glycosylation. The Kazal-like domain occupies 465-513 (LDPYSPCNNNCECQTDSFTPVCGADGITYLSACFAGCNSTNLTGCACLT). 3 disulfide bridges follow: C471–C497, C475–C486, and C477–C501. N502, N505, and N519 each carry an N-linked (GlcNAc...) asparagine glycan. A helical membrane pass occupies residues 540–562 (LCVMCVCSLIGAMAQTPSVIILI). At 563–571 (RTVSPELKS) the chain is on the cytoplasmic side. The chain crosses the membrane as a helical span at residues 572-597 (YALGVLFLLLRLLGFIPPPLIFGAGI). Residues 598-630 (DSTCLFWSTFCGEQGACVLYDNVVYRYLYVSIA) are Extracellular-facing. Residues 631–648 (IALKSFAFILYTTTWQCL) form a helical membrane-spanning segment. Residues 649-705 (RKNYKRYIKNHEGGLSTSEFFASTLTLDNLGRDPVPAHQTHRTKFIYNLEDHEWCEN) lie on the Cytoplasmic side of the membrane.

It belongs to the organo anion transporter (TC 2.A.60) family. In terms of tissue distribution, widely expressed.

Its subcellular location is the basolateral cell membrane. The protein localises to the apical cell membrane. It localises to the basal cell membrane. The enzyme catalyses L-thyroxine(out) = L-thyroxine(in). It catalyses the reaction prostaglandin E1(out) = prostaglandin E1(in). It carries out the reaction prostaglandin E2(out) = prostaglandin E2(in). The catalysed reaction is prostaglandin F2alpha(out) = prostaglandin F2alpha(in). The enzyme catalyses (5Z,8Z,11Z,14Z)-eicosatetraenoate(out) = (5Z,8Z,11Z,14Z)-eicosatetraenoate(in). It catalyses the reaction taurocholate(out) = taurocholate(in). It carries out the reaction glycocholate(out) = glycocholate(in). The catalysed reaction is estrone 3-sulfate(out) = estrone 3-sulfate(in). The enzyme catalyses argipressin(out) = argipressin(in). Its function is as follows. Putative organic anion antiporter with apparent broad substrate specificity. Recognizes various substrates including thyroid hormone L-thyroxine, prostanoids such as prostaglandin E1 and E2, bile acids such as taurocholate, glycolate and glycochenodeoxycholate and peptide hormones such as L-arginine vasopressin, likely operating in a tissue-specific manner. The transport mechanism, its electrogenicity and potential tissue-specific counterions remain to be elucidated. The sequence is that of Solute carrier organic anion transporter family member 3A1 (Slco3a1) from Mus musculus (Mouse).